We begin with the raw amino-acid sequence, 239 residues long: MIEQWQRGFVLHRREYSESSLLVDFFTENHGRITLLAKGVRRPRSPLKSVLQPFTPLLLKWTGKGDLKTLTKAEPASLTLPMQTLALYSGFYVNEVLARVLENHTAYPELFQHYLHCMTKLASQPNEIEPILRTFEFQTLKALGYGVDFCHCAATGKPVDPKMSYQFRENEGFIASLLQNNYTFIGKDLLAFAEMDFSEKETLQSAKRFTRIALKPYLGSAPLKSRELFQSVLPNRLKG.

The protein belongs to the RecO family.

Functionally, involved in DNA repair and RecF pathway recombination. The sequence is that of DNA repair protein RecO from Glaesserella parasuis serovar 5 (strain SH0165) (Haemophilus parasuis).